We begin with the raw amino-acid sequence, 646 residues long: Cartilage acidic protein 1 (646 aa).

The first 28 residues, 1–28, serve as a signal peptide directing secretion; sequence MAPSADPGMVRMALLLLPPLWLLPLTGG. One copy of the FG-GAP 1; atypical repeat lies at 47–89; the sequence is DYDSNPTQLNYGVAVTDVDHDGDFEIVVAGYTGPNLVLKYNRA. One copy of the FG-GAP 2; atypical repeat lies at 106–148; it reads YALRDRQGNAIGVTACDIDGDGREEIYFLNTNNAFSGVATYTD. The FG-GAP 3; atypical repeat unit spans residues 284–334; the sequence is AGVDDPHQHGRGVALADFNRDGKVDIVYGNWNGPHRLYLQMSAHGKVRFRD. Residues 396–438 form an FG-GAP 4; atypical repeat; that stretch reads GDALEPEGRGTGGVVTDFDGDGMLDLILSHGESMAQPLSVFRG. An EGF-like domain is found at 560 to 606; that stretch reads DTNECIQFPFVCPRDKPVCVNTYGSYRCRTNKRCNRGYEPNEDGTAC. 3 disulfides stabilise this stretch: C564–C578, C571–C587, and C593–C606.

It is found in the secreted. Its subcellular location is the extracellular space. The protein localises to the extracellular matrix. The chain is Cartilage acidic protein 1 (Crtac1) from Mus musculus (Mouse).